Here is a 123-residue protein sequence, read N- to C-terminus: Small ribosomal subunit protein uS12c (123 aa).

Belongs to the universal ribosomal protein uS12 family. Part of the 30S ribosomal subunit.

It is found in the plastid. The protein localises to the chloroplast. With S4 and S5 plays an important role in translational accuracy. Located at the interface of the 30S and 50S subunits. The chain is Small ribosomal subunit protein uS12c (rps12) from Anthoceros angustus (Hornwort).